We begin with the raw amino-acid sequence, 410 residues long: Multifunctional CCA protein (410 aa).

Positions 8 and 11 each coordinate ATP. Residues G8 and R11 each coordinate CTP. Mg(2+) is bound by residues E21 and D23. ATP contacts are provided by R91, R137, and R140. Positions 91, 137, and 140 each coordinate CTP. The region spanning T228–F329 is the HD domain.

It belongs to the tRNA nucleotidyltransferase/poly(A) polymerase family. Bacterial CCA-adding enzyme type 1 subfamily. Monomer. Can also form homodimers and oligomers. Requires Mg(2+) as cofactor. The cofactor is Ni(2+).

It carries out the reaction a tRNA precursor + 2 CTP + ATP = a tRNA with a 3' CCA end + 3 diphosphate. The catalysed reaction is a tRNA with a 3' CCA end + 2 CTP + ATP = a tRNA with a 3' CCACCA end + 3 diphosphate. In terms of biological role, catalyzes the addition and repair of the essential 3'-terminal CCA sequence in tRNAs without using a nucleic acid template. Adds these three nucleotides in the order of C, C, and A to the tRNA nucleotide-73, using CTP and ATP as substrates and producing inorganic pyrophosphate. tRNA 3'-terminal CCA addition is required both for tRNA processing and repair. Also involved in tRNA surveillance by mediating tandem CCA addition to generate a CCACCA at the 3' terminus of unstable tRNAs. While stable tRNAs receive only 3'-terminal CCA, unstable tRNAs are marked with CCACCA and rapidly degraded. The sequence is that of Multifunctional CCA protein from Legionella pneumophila (strain Paris).